Consider the following 453-residue polypeptide: MSDVSTQSPKVGFVSLGCPKALVDSEQIITQLRAEGYEISGTYGGADLVVVNTCGFIDEAVQESLDAIGEALAENGKVIVTGCLGAKKDASGQDIITSVHPKVLAVTGPHALGEVMEAVHTHLPKPHDPFIDLVPPQGIKLTPKHYAYLKISEGCNHRCSFCIIPSMRGDLVSRPVAEVMLEAENLLKAGVKELLVISQDTSAYGVDVKFRMGFWNGRPLKTRMTELVGALGELASQYGAWVRLHYVYPYPSVDEVMPLMAEGKVLPYLDVPLQHAHPDVLKRMKRPANAEKTLDRIRAWREVCPELTIRSTFIAGFPGETEEEFQTLLDFIAEAELDRVGCFAYSPVEGATANDLPGALPDEVREERRARFMEVAERVSARGLQRKVGKSLRVLVDEVNQDGGIGRSSADAPEIDGLVYIAPPSKPYKRYKAGDFVSVKITGADGHDLWGEV.

An MTTase N-terminal domain is found at 9–124; sequence PKVGFVSLGC…VMEAVHTHLP (116 aa). Residues C18, C54, C83, C155, C159, and C162 each contribute to the [4Fe-4S] cluster site. The 242-residue stretch at 141 to 382 folds into the Radical SAM core domain; sequence LTPKHYAYLK…MEVAERVSAR (242 aa). The region spanning 385-453 is the TRAM domain; it reads QRKVGKSLRV…ADGHDLWGEV (69 aa).

The protein belongs to the methylthiotransferase family. RimO subfamily. The cofactor is [4Fe-4S] cluster.

It is found in the cytoplasm. It catalyses the reaction L-aspartate(89)-[ribosomal protein uS12]-hydrogen + (sulfur carrier)-SH + AH2 + 2 S-adenosyl-L-methionine = 3-methylsulfanyl-L-aspartate(89)-[ribosomal protein uS12]-hydrogen + (sulfur carrier)-H + 5'-deoxyadenosine + L-methionine + A + S-adenosyl-L-homocysteine + 2 H(+). In terms of biological role, catalyzes the methylthiolation of an aspartic acid residue of ribosomal protein uS12. This is Ribosomal protein uS12 methylthiotransferase RimO from Ralstonia pickettii (strain 12J).